A 239-amino-acid chain; its full sequence is RNA-binding protein 38 (239 aa).

Positions 34–111 (TKIFVGGLPY…RKANVNLAYL (78 aa)) constitute an RRM domain.

This sequence belongs to the RBM38 family.

The protein resides in the cytoplasm. The protein localises to the cytosol. Its subcellular location is the nucleus. In terms of biological role, RNA-binding protein that specifically bind the 3'-UTR of CDKN1A transcripts, leading to maintain the stability of CDKN1A transcripts, thereby acting as a mediator of the p53/TP53 family to regulate CDKN1A. CDKN1A is a cyclin-dependent kinase inhibitor transcriptionally regulated by the p53/TP53 family to induce cell cycle arrest. Isoform 1, but not isoform 2, has the ability to induce cell cycle arrest in G1 and maintain the stability of CDKN1A transcripts induced by p53/TP53. Also acts as a mRNA splicing factor. Specifically regulates the expression of FGFR2-IIIb, an epithelial cell-specific isoform of FGFR2. Plays a role in myogenic differentiation. Its function is as follows. (Microbial infection) Essential factor for the splicing of the pre-mRNAs of human parvovirus B19 (B19V) and for the expression of B19V 11-kDa protein, which enhances viral replication. This Homo sapiens (Human) protein is RNA-binding protein 38 (RBM38).